The sequence spans 1295 residues: Serine protease pet autotransporter (1295 aa).

An N-terminal signal peptide occupies residues 1 to 52; sequence MNKIYSIKYSAATGGLIAVSELAKKVICKTNRKISAALLSLAVISYTNIIYA. In terms of domain architecture, Peptidase S6 spans 54–304; it reads NMDISKAWAR…TPFDSKTTNE (251 aa). Residues His-124, Asp-153, and Ser-260 each act as charge relay system in the active site. Positions 1029-1295 constitute an Autotransporter domain; sequence DINGEAGAWA…AINANFRYSF (267 aa).

In terms of processing, cleaved to release the mature protein from the outer membrane.

The protein localises to the periplasm. The protein resides in the secreted. It localises to the cell surface. Its subcellular location is the cell outer membrane. With respect to regulation, inhibition of cytotoxic activity by phenylmethylsulfonyl fluoride. Serine protease with enterotoxic and cytotoxic activity. Internalization into the host cell is required for the induction of cytopathic effects. However, the serine activity is not necessary for secretion and internalization into the host cell. The sequence is that of Serine protease pet autotransporter (pet) from Escherichia coli O44:H18 (strain 042 / EAEC).